We begin with the raw amino-acid sequence, 434 residues long: Zinc carboxypeptidase (434 aa).

An N-terminal signal peptide occupies residues 1–33 (MSPKRRRLMAAALGACVALVLPLHAGSAQPSTA). A propeptide spans 34 to 114 (KTPERTVFEV…DFTDPQVGTQ (81 aa)) (activation peptide). The region spanning 122–423 (GYHNFQETVT…SAVELFLSYS (302 aa)) is the Peptidase M14 domain. Zn(2+) is bound by residues histidine 183 and glutamate 186. Positions 270–295 (GSSSSGSSETTAARRRSPPRRSPHPH) are disordered. Residues 282 to 293 (ARRRSPPRRSPH) are compositionally biased toward basic residues. Histidine 315 lines the Zn(2+) pocket. The Proton donor/acceptor role is filled by glutamate 388.

Belongs to the peptidase M14 family. Zn(2+) is required as a cofactor.

The catalysed reaction is Releases a C-terminal residue, which may be hydrophobic or positively charged.. Functionally, carboxypeptidase that possesses the specificities of both mammalian Cpase A and B. Thus shows broad substrate specificity, being able to cleave Cbz-Gly-Leu, Cbz-Gly-Val, Cbz-Gly-Phe, Cbz-Gly-Lys and Bz-Gly-Arg in vitro. This is Zinc carboxypeptidase from Saccharothrix mutabilis subsp. capreolus (Streptomyces capreolus).